The primary structure comprises 424 residues: Tyrosine--tRNA ligase (424 aa).

Tyr-37 serves as a coordination point for L-tyrosine. Residues 42-51 (PTADSLHLGH) carry the 'HIGH' region motif. Residues Tyr-175 and Gln-179 each coordinate L-tyrosine. The 'KMSKS' region motif lies at 235–239 (KFGKT). Lys-238 contacts ATP. Residues 357-414 (ADLQQALVNAELVPSRGQARTMIGSNAVTINGEKQSNAEYNFSDADRLFGRYTLLRRG) enclose the S4 RNA-binding domain.

Belongs to the class-I aminoacyl-tRNA synthetase family. TyrS type 1 subfamily. As to quaternary structure, homodimer.

The protein resides in the cytoplasm. It catalyses the reaction tRNA(Tyr) + L-tyrosine + ATP = L-tyrosyl-tRNA(Tyr) + AMP + diphosphate + H(+). In terms of biological role, catalyzes the attachment of tyrosine to tRNA(Tyr) in a two-step reaction: tyrosine is first activated by ATP to form Tyr-AMP and then transferred to the acceptor end of tRNA(Tyr). This chain is Tyrosine--tRNA ligase, found in Serratia proteamaculans (strain 568).